The following is a 166-amino-acid chain: Crossover junction endodeoxyribonuclease RuvC (166 aa).

Residues aspartate 11, glutamate 70, and aspartate 142 contribute to the active site. Residues aspartate 11, glutamate 70, and aspartate 142 each coordinate Mg(2+).

Belongs to the RuvC family. Homodimer which binds Holliday junction (HJ) DNA. The HJ becomes 2-fold symmetrical on binding to RuvC with unstacked arms; it has a different conformation from HJ DNA in complex with RuvA. In the full resolvosome a probable DNA-RuvA(4)-RuvB(12)-RuvC(2) complex forms which resolves the HJ. Mg(2+) serves as cofactor.

The protein resides in the cytoplasm. The catalysed reaction is Endonucleolytic cleavage at a junction such as a reciprocal single-stranded crossover between two homologous DNA duplexes (Holliday junction).. Its function is as follows. The RuvA-RuvB-RuvC complex processes Holliday junction (HJ) DNA during genetic recombination and DNA repair. Endonuclease that resolves HJ intermediates. Cleaves cruciform DNA by making single-stranded nicks across the HJ at symmetrical positions within the homologous arms, yielding a 5'-phosphate and a 3'-hydroxyl group; requires a central core of homology in the junction. The consensus cleavage sequence is 5'-(A/T)TT(C/G)-3'. Cleavage occurs on the 3'-side of the TT dinucleotide at the point of strand exchange. HJ branch migration catalyzed by RuvA-RuvB allows RuvC to scan DNA until it finds its consensus sequence, where it cleaves and resolves the cruciform DNA. This is Crossover junction endodeoxyribonuclease RuvC from Nitratidesulfovibrio vulgaris (strain DP4) (Desulfovibrio vulgaris).